The following is a 561-amino-acid chain: Putative transport protein YbjL (561 aa).

Helical transmembrane passes span 8 to 28 (LLNG…LCLG), 32 to 52 (LGSV…LLGQ), 66 to 86 (FMLF…SIFF), 94 to 114 (MLAL…GKLF), and 158 to 178 (NLSL…IVGA). 2 consecutive RCK C-terminal domains span residues 200-288 (RGLD…SFRN) and 292-373 (VFDR…RIGF). Transmembrane regions (helical) follow at residues 383–403 (LLAF…TFQF), 406–426 (FSFG…LGFL), 447–467 (FGLM…ISNG), 475–495 (MLIA…LFGA), and 540–560 (AIAN…WPGL).

This sequence belongs to the AAE transporter (TC 2.A.81) family. YbjL subfamily.

The protein localises to the cell membrane. The protein is Putative transport protein YbjL of Salmonella dublin (strain CT_02021853).